A 322-amino-acid polypeptide reads, in one-letter code: Malate dehydrogenase (322 aa).

Residues 10–15 (GSGQIG) and aspartate 34 contribute to the NAD(+) site. Substrate contacts are provided by arginine 83 and arginine 89. NAD(+) is bound by residues asparagine 96 and 119-121 (ITN). 2 residues coordinate substrate: asparagine 121 and arginine 152. Histidine 176 serves as the catalytic Proton acceptor.

It belongs to the LDH/MDH superfamily. MDH type 3 family.

It catalyses the reaction (S)-malate + NAD(+) = oxaloacetate + NADH + H(+). In terms of biological role, catalyzes the reversible oxidation of malate to oxaloacetate. This is Malate dehydrogenase from Nitrobacter winogradskyi (strain ATCC 25391 / DSM 10237 / CIP 104748 / NCIMB 11846 / Nb-255).